The sequence spans 173 residues: Crossover junction endodeoxyribonuclease RuvC (173 aa).

Residues D8, E67, and D139 contribute to the active site. 3 residues coordinate Mg(2+): D8, E67, and D139.

This sequence belongs to the RuvC family. Homodimer which binds Holliday junction (HJ) DNA. The HJ becomes 2-fold symmetrical on binding to RuvC with unstacked arms; it has a different conformation from HJ DNA in complex with RuvA. In the full resolvosome a probable DNA-RuvA(4)-RuvB(12)-RuvC(2) complex forms which resolves the HJ. Requires Mg(2+) as cofactor.

The protein localises to the cytoplasm. It carries out the reaction Endonucleolytic cleavage at a junction such as a reciprocal single-stranded crossover between two homologous DNA duplexes (Holliday junction).. Its function is as follows. The RuvA-RuvB-RuvC complex processes Holliday junction (HJ) DNA during genetic recombination and DNA repair. Endonuclease that resolves HJ intermediates. Cleaves cruciform DNA by making single-stranded nicks across the HJ at symmetrical positions within the homologous arms, yielding a 5'-phosphate and a 3'-hydroxyl group; requires a central core of homology in the junction. The consensus cleavage sequence is 5'-(A/T)TT(C/G)-3'. Cleavage occurs on the 3'-side of the TT dinucleotide at the point of strand exchange. HJ branch migration catalyzed by RuvA-RuvB allows RuvC to scan DNA until it finds its consensus sequence, where it cleaves and resolves the cruciform DNA. This Vibrio vulnificus (strain CMCP6) protein is Crossover junction endodeoxyribonuclease RuvC.